Reading from the N-terminus, the 282-residue chain is Phosphatidylglycerol--prolipoprotein diacylglyceryl transferase (282 aa).

3 helical membrane passes run 19 to 39 (IGPF…VFGW), 58 to 78 (ISLV…ILGG), and 104 to 124 (GGMS…WFAY). Arginine 149 contributes to the a 1,2-diacyl-sn-glycero-3-phospho-(1'-sn-glycerol) binding site. Transmembrane regions (helical) follow at residues 190 to 210 (AGME…LGAL), 214 to 234 (GMIL…GEHF), and 250 to 270 (MGML…VLAI).

Belongs to the Lgt family.

The protein resides in the cell inner membrane. It catalyses the reaction L-cysteinyl-[prolipoprotein] + a 1,2-diacyl-sn-glycero-3-phospho-(1'-sn-glycerol) = an S-1,2-diacyl-sn-glyceryl-L-cysteinyl-[prolipoprotein] + sn-glycerol 1-phosphate + H(+). It functions in the pathway protein modification; lipoprotein biosynthesis (diacylglyceryl transfer). Its function is as follows. Catalyzes the transfer of the diacylglyceryl group from phosphatidylglycerol to the sulfhydryl group of the N-terminal cysteine of a prolipoprotein, the first step in the formation of mature lipoproteins. The polypeptide is Phosphatidylglycerol--prolipoprotein diacylglyceryl transferase (Bradyrhizobium diazoefficiens (strain JCM 10833 / BCRC 13528 / IAM 13628 / NBRC 14792 / USDA 110)).